Here is a 147-residue protein sequence, read N- to C-terminus: DNA-directed RNA polymerase subunit 6 homolog (147 aa).

The disordered stretch occupies residues 20–39 (ETEEENFVDSEEESEDKDEI).

It belongs to the archaeal RpoK/eukaryotic RPB6 RNA polymerase subunit family. Part of the viral DNA-directed RNA polymerase that consists of 8 polII-like subunits (RPB1, RPB2, RPB3, RPB5, RPB6, RPB7, RPB9, RPB10), a capping enzyme and a termination factor.

Its subcellular location is the host cytoplasm. The protein resides in the virion. Its function is as follows. Component of the DNA-directed RNA polymerase (RNAP) that catalyzes the transcription in the cytoplasm of viral DNA into RNA using the four ribonucleoside triphosphates as substrates. The sequence is that of DNA-directed RNA polymerase subunit 6 homolog from Ornithodoros (relapsing fever ticks).